Reading from the N-terminus, the 215-residue chain is Ras-related protein Rab-5A (215 aa).

GTP-binding residues include Ser-29, Ala-30, Gly-32, Lys-33, Ser-34, Ser-35, His-46, Glu-47, Thr-52, and Gly-78. Ser-34 lines the Mg(2+) pocket. 2 short sequence motifs (switch) span residues 44–56 (QFHEFQESTIGAA) and 77–93 (AGQERYHSLAPMYYRGA). Thr-52 serves as a coordination point for Mg(2+). Ser-84 carries the post-translational modification Phosphoserine. 5 residues coordinate GTP: Asn-133, Lys-134, Asp-136, Ala-164, and Lys-165. The segment at 181 to 215 (LPKNEPQNPGANSARGRGVDLTEPTQPTRSQCCSN) is disordered. A compositionally biased stretch (polar residues) spans 203 to 215 (EPTQPTRSQCCSN). 2 S-geranylgeranyl cysteine lipidation sites follow: Cys-212 and Cys-213.

This sequence belongs to the small GTPase superfamily. Rab family. In terms of assembly, interacts with GDI1; this promotes dissociation from membranes; phosphorylation at Ser-84 disrupts this interaction. Interacts with GDI2; phosphorylation at Ser-84 disrupts the interaction. Binds EEA1. Interacts with ALS2CL, SUN2, ZFYVE20 and RUFY1. Interacts with RIN1 and GAPVD1, which regulate its pathway, probably by acting as a GEF. Interacts with SGSM1 and SGSM3. Interacts with PIK3CB. Interacts with RABEP1 and RINL. Interacts with OCRL and INPP5F. May be a component of a complex composed of RAB5A, DYN2 and PIK3C3. Does not interact with the BLOC-3 complex (heterodimer of HPS1 and HPS4). Interacts with CLN5. Interacts with APPL2. Interacts with F8A1/F8A2/F8A3. Found in a complex with F8A1/F8A2/F8A3, HTT and RAB5A; mediates the recruitment of HTT by RAB5A onto early endosomes. Interacts with ATP9A. Interacts with PPP1R21; mediates the recruitment of FERRY complex by RAB5A onto early endosomes. Requires Mg(2+) as cofactor. Phosphorylation of Ser-84 in the switch II region by LRRK2 prevents the association of RAB regulatory proteins, including RAB GDP dissociation inhibitors GDI1 and GDI2.

The protein resides in the cell membrane. It is found in the early endosome membrane. Its subcellular location is the melanosome. The protein localises to the cytoplasmic vesicle. It localises to the cell projection. The protein resides in the ruffle. It is found in the cytoplasm. Its subcellular location is the cytosol. The protein localises to the membrane. It localises to the phagosome membrane. The protein resides in the endosome membrane. The catalysed reaction is GTP + H2O = GDP + phosphate + H(+). Its activity is regulated as follows. Regulated by guanine nucleotide exchange factors (GEFs) including RINL, which promote the exchange of bound GDP for free GTP. Regulated by GTPase activating proteins (GAPs) which increase the GTP hydrolysis activity. Inhibited by GDP dissociation inhibitors (GDIs). In terms of biological role, the small GTPases Rab are key regulators of intracellular membrane trafficking, from the formation of transport vesicles to their fusion with membranes. Rabs cycle between an inactive GDP-bound form and an active GTP-bound form that is able to recruit to membranes different sets of downstream effectors directly responsible for vesicle formation, movement, tethering and fusion. RAB5A is required for the fusion of plasma membranes and early endosomes. Contributes to the regulation of filopodia extension. Required for the exosomal release of SDCBP, CD63, PDCD6IP and syndecan. Regulates maturation of apoptotic cell-containing phagosomes, probably downstream of DYN2 and PIK3C3. This chain is Ras-related protein Rab-5A (RAB5A), found in Canis lupus familiaris (Dog).